Here is a 591-residue protein sequence, read N- to C-terminus: V-type ATP synthase alpha chain (591 aa).

Residue 233–240 (GPFGAGKT) coordinates ATP.

Belongs to the ATPase alpha/beta chains family.

The enzyme catalyses ATP + H2O + 4 H(+)(in) = ADP + phosphate + 5 H(+)(out). In terms of biological role, produces ATP from ADP in the presence of a proton gradient across the membrane. The V-type alpha chain is a catalytic subunit. The chain is V-type ATP synthase alpha chain from Streptococcus pyogenes serotype M1.